Here is a 795-residue protein sequence, read N- to C-terminus: Multiple C2 domain and transmembrane region protein 12 (795 aa).

C2 domains lie at 24-142, 180-298, and 341-463; these read RNPR…PQWY, VCAS…SAPA, and YSSD…TCSY. Residues Asn-57, Asp-109, and Asn-113 each coordinate Ca(2+). Helical transmembrane passes span 590–610, 612–632, 730–750, and 752–772; these read CTPK…EYYI, WLVT…VILL, FVLI…CLGW, and LHVR…LPWF.

It belongs to the MCTP family. Ca(2+) is required as a cofactor. Expressed in root vascular tissues and meristems. Observed in flowers.

The protein localises to the endoplasmic reticulum membrane. May function as a signaling molecule by regulating the trafficking of other regulators. In Arabidopsis thaliana (Mouse-ear cress), this protein is Multiple C2 domain and transmembrane region protein 12.